Reading from the N-terminus, the 115-residue chain is Cholecystokinin (115 aa).

Residues 1–20 form the signal peptide; it reads MNSGVCLCVLMAVLAAGALT. Residues 21–44 constitute a propeptide that is removed on maturation; that stretch reads QPVPPADPAGSGLQRAEEAPRRQL. A disordered region spans residues 23-52; it reads VPPADPAGSGLQRAEEAPRRQLRVSQRTDG. The O-linked (Xyl...) (chondroitin sulfate) serine glycan is linked to S31. Sulfotyrosine is present on Y97. F103 carries the post-translational modification Phenylalanine amide. A propeptide spanning residues 107–115 is cleaved from the precursor; that stretch reads SAEEYEYPS. 2 positions are modified to sulfotyrosine: Y111 and Y113.

It belongs to the gastrin/cholecystokinin family. As to quaternary structure, binds to CCK-A receptors in the pancreas and CCK-B receptors in the brain. Post-translationally, the precursor is cleaved by proteases to produce a number of active cholecystokinins. The precursor is cleaved by ACE, which removes the Gly-Arg-Arg peptide at the C-terminus, leading to mature hormone. In terms of tissue distribution, detected in cerebrospinal fluid and urine (at protein level).

The protein localises to the secreted. This peptide hormone induces gall bladder contraction and the release of pancreatic enzymes in the gut. Its function in the brain is not clear. Binding to CCK-A receptors stimulates amylase release from the pancreas, binding to CCK-B receptors stimulates gastric acid secretion. In Homo sapiens (Human), this protein is Cholecystokinin (CCK).